A 316-amino-acid chain; its full sequence is Membrane protein UL148 (316 aa).

An N-terminal signal peptide occupies residues methionine 1–alanine 20. A helical transmembrane segment spans residues phenylalanine 286 to isoleucine 308.

As to quaternary structure, interacts with host SEL1L.

Its subcellular location is the host endoplasmic reticulum membrane. Its function is as follows. Chaperone protein that plays an important role in HCMV tropism. Cooperates with UL116 to regulate the abundance of gH-gL complexes in virion. Favors the incorporation of gL into virions once UL116 has regulated the early folding steps of virion assembly. Interacts with the host ERAD machinery and slows gO decay which would otherwise be constitutively degraded. Reorganizes the host endoplasmic reticulum and activates the unfolded protein response. Additionally, plays a role in the evasion of antiviral immune response by down-regulating cell surface expression of host CD58. Mechanistically, interacts with host CD58 and retains its immature form intracellularly. The capacity to cause endoplasmic reticulum reorganization and the intracellular retention of host CD58 are functionally independent properties. This Human cytomegalovirus (strain Merlin) (HHV-5) protein is Membrane protein UL148 (UL148).